Here is a 294-residue protein sequence, read N- to C-terminus: Acetyl-coenzyme A carboxylase carboxyl transferase subunit beta (294 aa).

The CoA carboxyltransferase N-terminal domain maps to 25-294 (VWTKCTACEQ…PFLEPEIIAD (270 aa)). Positions 29, 32, 48, and 51 each coordinate Zn(2+). Residues 29-51 (CTACEQVLYRDELKRHLEVCPKC) form a C4-type zinc finger.

The protein belongs to the AccD/PCCB family. Acetyl-CoA carboxylase is a heterohexamer composed of biotin carboxyl carrier protein (AccB), biotin carboxylase (AccC) and two subunits each of ACCase subunit alpha (AccA) and ACCase subunit beta (AccD). Zn(2+) serves as cofactor.

The protein resides in the cytoplasm. The enzyme catalyses N(6)-carboxybiotinyl-L-lysyl-[protein] + acetyl-CoA = N(6)-biotinyl-L-lysyl-[protein] + malonyl-CoA. Its pathway is lipid metabolism; malonyl-CoA biosynthesis; malonyl-CoA from acetyl-CoA: step 1/1. Its function is as follows. Component of the acetyl coenzyme A carboxylase (ACC) complex. Biotin carboxylase (BC) catalyzes the carboxylation of biotin on its carrier protein (BCCP) and then the CO(2) group is transferred by the transcarboxylase to acetyl-CoA to form malonyl-CoA. This is Acetyl-coenzyme A carboxylase carboxyl transferase subunit beta from Actinobacillus succinogenes (strain ATCC 55618 / DSM 22257 / CCUG 43843 / 130Z).